We begin with the raw amino-acid sequence, 91 residues long: DNA-directed RNA polymerase subunit omega (91 aa).

The protein belongs to the RNA polymerase subunit omega family. As to quaternary structure, the RNAP catalytic core consists of 2 alpha, 1 beta, 1 beta' and 1 omega subunit. When a sigma factor is associated with the core the holoenzyme is formed, which can initiate transcription.

The catalysed reaction is RNA(n) + a ribonucleoside 5'-triphosphate = RNA(n+1) + diphosphate. Functionally, promotes RNA polymerase assembly. Latches the N- and C-terminal regions of the beta' subunit thereby facilitating its interaction with the beta and alpha subunits. This is DNA-directed RNA polymerase subunit omega from Shigella flexneri.